The chain runs to 614 residues: Protein YehQ (614 aa).

2 consecutive SWIM-type zinc fingers follow at residues 55-89 (VRTQ…LSYQ) and 151-185 (SDVR…QAFV).

This is Protein YehQ (yehQ) from Escherichia coli (strain K12).